The primary structure comprises 358 residues: 3-dehydroquinate synthase (358 aa).

NAD(+) is bound by residues 70 to 75 (DGEQFK), 104 to 108 (GVIGD), 128 to 129 (TT), Lys-141, Lys-150, and 168 to 171 (CLHT). Zn(2+) is bound by residues Glu-183, His-246, and His-263.

Belongs to the sugar phosphate cyclases superfamily. Dehydroquinate synthase family. Requires Co(2+) as cofactor. The cofactor is Zn(2+). NAD(+) serves as cofactor.

It is found in the cytoplasm. The enzyme catalyses 7-phospho-2-dehydro-3-deoxy-D-arabino-heptonate = 3-dehydroquinate + phosphate. It functions in the pathway metabolic intermediate biosynthesis; chorismate biosynthesis; chorismate from D-erythrose 4-phosphate and phosphoenolpyruvate: step 2/7. Its function is as follows. Catalyzes the conversion of 3-deoxy-D-arabino-heptulosonate 7-phosphate (DAHP) to dehydroquinate (DHQ). The polypeptide is 3-dehydroquinate synthase (Shewanella baltica (strain OS155 / ATCC BAA-1091)).